A 422-amino-acid chain; its full sequence is MGQTLTEKIFSAHTNKQVSAGEIIESPIDMVIGNDITTPLSIRAFEESGATKLANPDGFCIVMDHFIPAKDIASANQARISRDFAKKHQLKHYFDERDMGIEHAILPEKGLVLPGDVIIGADSHTCTHGALGAFATGMGSTDLAYAMITGKNWFKVPPSIRVVFKGKLQEHVYGKDLILEIIRQIGVDGALYKALEFQGDTIEQLSMDDRFSLCNMAIEAGAKNGIIAADSITKEFLASRKSLRAEPKYYQADADALYEQTIEIDVEKLEPVIAYPFLPSNGKSISQAVKDDLKIDQAFIGSCTNGRLSDLRIAAQILKGKRVHPDVRLIITPGTQQIYKDAHQEGLIDTLLEAGALISNPTCGACLGGYMGILGDNERCVSTTNRNFVGRMGARSSEVYLANSAVAAASALKGKITDPRKL.

Residues C303, C363, and C366 each coordinate [4Fe-4S] cluster.

It belongs to the aconitase/IPM isomerase family. LeuC type 2 subfamily. In terms of assembly, heterodimer of LeuC and LeuD. It depends on [4Fe-4S] cluster as a cofactor.

It carries out the reaction (2R,3S)-3-isopropylmalate = (2S)-2-isopropylmalate. The protein operates within amino-acid biosynthesis; L-leucine biosynthesis; L-leucine from 3-methyl-2-oxobutanoate: step 2/4. Functionally, catalyzes the isomerization between 2-isopropylmalate and 3-isopropylmalate, via the formation of 2-isopropylmaleate. The polypeptide is 3-isopropylmalate dehydratase large subunit (Wolinella succinogenes (strain ATCC 29543 / DSM 1740 / CCUG 13145 / JCM 31913 / LMG 7466 / NCTC 11488 / FDC 602W) (Vibrio succinogenes)).